The chain runs to 162 residues: Phosphopantetheine adenylyltransferase (162 aa).

S11 provides a ligand contact to substrate. ATP is bound by residues 11-12 (SF) and H19. The substrate site is built by K43, V76, and R90. ATP is bound by residues 91 to 93 (GLR), E101, and 126 to 132 (HLYISSS).

The protein belongs to the bacterial CoaD family. As to quaternary structure, homohexamer. Mg(2+) is required as a cofactor.

It localises to the cytoplasm. The enzyme catalyses (R)-4'-phosphopantetheine + ATP + H(+) = 3'-dephospho-CoA + diphosphate. It participates in cofactor biosynthesis; coenzyme A biosynthesis; CoA from (R)-pantothenate: step 4/5. Functionally, reversibly transfers an adenylyl group from ATP to 4'-phosphopantetheine, yielding dephospho-CoA (dPCoA) and pyrophosphate. In Streptococcus pneumoniae (strain 70585), this protein is Phosphopantetheine adenylyltransferase.